Reading from the N-terminus, the 648-residue chain is Centrosomal protein of 63 kDa-B (648 aa).

Coiled-coil stretches lie at residues 19 to 188 (DSCE…QSHN) and 222 to 555 (EEEL…DAAS). Ser559 carries the phosphoserine; by atm and atr modification. Residues 611-644 (FLQEEEQRSHELLQRLNAHIEELKQESQRTVEHF) are a coiled coil.

The protein belongs to the CEP63 family. In terms of processing, phosphorylation at Ser-559 by atm and atr promotes its delocalization from the centrosome and impairs its ability to promote centrosome dependent spindle assembly.

Its subcellular location is the cytoplasm. It localises to the cytoskeleton. It is found in the microtubule organizing center. The protein localises to the centrosome. The protein resides in the centriole. Required for normal spindle assembly. Plays a key role in mother-centriole-dependent centriole duplication. Plays a role in DNA damage response. Following DNA damage, such as double-strand breaks (DSBs), is removed from centrosomes; this leads to the inactivation of spindle assembly and delay in mitotic progression. This Xenopus laevis (African clawed frog) protein is Centrosomal protein of 63 kDa-B (cep63-b).